A 301-amino-acid polypeptide reads, in one-letter code: MKIGILSRNASLYSTKRLIEACKQRGHEVRVIDALRCYMNINSDKPEIHYKGEELAGFDAVIPRIGASVTFYGTAVLRQFEMMGVYPANESVAITRSRDKLRSMQLLSRRGIGMPITGFASKPDDVKDLLDMVGGAPVVIKLLEGTQGIGVVLAETRTAAESVIEAFMGLKANIMVQEYIKEAGGADIRCFVIGDKVIAAMKRQGADGEFRSNLHRGGTASLVKITPQERKTAIEAAKIMGLNVAGVDLLRSARGPLVMEVNSSPGLEGIEAATGKDIAGMIVEFIEKNAASKRTKTRGKG.

One can recognise an ATP-grasp domain in the interval 104–287 (MQLLSRRGIG…IAGMIVEFIE (184 aa)). ATP is bound by residues Lys-141, 178-179 (EY), Asp-187, and 211-213 (RSN). Asp-248, Glu-260, and Asn-262 together coordinate Mg(2+). The Mn(2+) site is built by Asp-248, Glu-260, and Asn-262.

This sequence belongs to the RimK family. Mg(2+) serves as cofactor. Requires Mn(2+) as cofactor.

The protein is Probable alpha-L-glutamate ligase of Vibrio cholerae serotype O1 (strain ATCC 39541 / Classical Ogawa 395 / O395).